Here is an 845-residue protein sequence, read N- to C-terminus: Ribosome-releasing factor 2, mitochondrial (845 aa).

The N-terminal 28 residues, 1 to 28 (MIIATSLRSQTFCTWRAWRAVHSTAVRL), are a transit peptide targeting the mitochondrion. In terms of domain architecture, tr-type G spans 38–330 (DRTRNIGIIA…GVVKYLPSPL (293 aa)). Residues 47-54 (AHIDAGKT), 111-115 (DTPGH), and 165-168 (NKMD) contribute to the GTP site.

The protein belongs to the TRAFAC class translation factor GTPase superfamily. Classic translation factor GTPase family. EF-G/EF-2 subfamily.

Its subcellular location is the mitochondrion. In terms of biological role, mitochondrial GTPase that mediates the disassembly of ribosomes from messenger RNA at the termination of mitochondrial protein biosynthesis. Not involved in the GTP-dependent ribosomal translocation step during translation elongation. The sequence is that of Ribosome-releasing factor 2, mitochondrial from Scheffersomyces stipitis (strain ATCC 58785 / CBS 6054 / NBRC 10063 / NRRL Y-11545) (Yeast).